Consider the following 180-residue polypeptide: Protein YOP1 (180 aa).

N-acetylserine is present on serine 2. The interaction with YIP1 stretch occupies residues 2-17 (SEYASSIHSQMKQFDT). Over 2–35 (SEYASSIHSQMKQFDTKYSGNRILQQLENKTNLP) the chain is Cytoplasmic. Residues 36-55 (KSYLVAGLGFAYLLLIFINV) form a helical membrane-spanning segment. The Lumenal segment spans residues 56–57 (GG). The helical transmembrane segment at 58–78 (VGEILSNFAGFVLPAYLSLVA) threads the bilayer. Over 79–88 (LKTPTSTDDT) the chain is Cytoplasmic. A helical transmembrane segment spans residues 89 to 105 (QLLTYWIVFSFLSVIEF). The Lumenal portion of the chain corresponds to 106 to 108 (WSK). Residues 109 to 127 (AILYLIPFYWFLKTVFLIY) form a helical membrane-spanning segment. Topologically, residues 128 to 180 (IALPQTGGARMIYQKIVAPLTDRYILRDVSKTEKDEIRASVNEASKATGASVH) are cytoplasmic.

The protein belongs to the DP1 family. In terms of assembly, oligomer. Interacts with YIP1.

Its subcellular location is the endoplasmic reticulum membrane. It localises to the golgi apparatus membrane. Functionally, required to generate and maintain the structure of the tubular endoplasmic reticulum network and the vacuole. Induces high curvature in membranes and causes membrane tubule formation. Involved in membrane/vesicle trafficking. This is Protein YOP1 (YOP1) from Saccharomyces cerevisiae (strain ATCC 204508 / S288c) (Baker's yeast).